We begin with the raw amino-acid sequence, 156 residues long: 3-hydroxyacyl-[acyl-carrier-protein] dehydratase FabZ (156 aa).

Residue His-54 is part of the active site.

It belongs to the thioester dehydratase family. FabZ subfamily.

It localises to the cytoplasm. It catalyses the reaction a (3R)-hydroxyacyl-[ACP] = a (2E)-enoyl-[ACP] + H2O. Functionally, involved in unsaturated fatty acids biosynthesis. Catalyzes the dehydration of short chain beta-hydroxyacyl-ACPs and long chain saturated and unsaturated beta-hydroxyacyl-ACPs. The protein is 3-hydroxyacyl-[acyl-carrier-protein] dehydratase FabZ of Koribacter versatilis (strain Ellin345).